The chain runs to 354 residues: Protein RecA (354 aa).

78–85 (GPESSGKT) contributes to the ATP binding site.

Belongs to the RecA family.

Its subcellular location is the cytoplasm. Can catalyze the hydrolysis of ATP in the presence of single-stranded DNA, the ATP-dependent uptake of single-stranded DNA by duplex DNA, and the ATP-dependent hybridization of homologous single-stranded DNAs. It interacts with LexA causing its activation and leading to its autocatalytic cleavage. This Zymomonas mobilis subsp. mobilis (strain ATCC 31821 / ZM4 / CP4) protein is Protein RecA.